The chain runs to 265 residues: Cell division protein FtsQ (265 aa).

Low complexity predominate over residues 1 to 13 (MAGATTAKGGARR). The segment at 1 to 25 (MAGATTAKGGARRTPPPGPPPPALK) is disordered. Residues 1-35 (MAGATTAKGGARRTPPPGPPPPALKARRRLRLPRR) are Cytoplasmic-facing. Positions 14-23 (TPPPGPPPPA) are enriched in pro residues. Residues 36–58 (RTLLVTGVATALLGSGVTWLLYG) form a helical membrane-spanning segment. Over 59 to 265 (SSWLRVEQVA…APTAPAVTHS (207 aa)) the chain is Extracellular. The 70-residue stretch at 62-131 (LRVEQVAVSG…DTIAVRVTER (70 aa)) folds into the POTRA domain.

It belongs to the FtsQ/DivIB family. FtsQ subfamily.

The protein resides in the cell membrane. Its function is as follows. Essential cell division protein. In Streptomyces bingchenggensis (strain BCW-1), this protein is Cell division protein FtsQ.